The following is a 1008-amino-acid chain: Probable beta-galactosidase B (1008 aa).

An N-terminal signal peptide occupies residues 1 to 18 (MLLQSLFAWALAIGPCIA). N-linked (GlcNAc...) asparagine glycans are attached at residues N20 and N23. Position 87 (Y87) interacts with substrate. The N-linked (GlcNAc...) asparagine glycan is linked to N108. The substrate site is built by N132, A133, E134, and N192. E193 functions as the Proton donor in the catalytic mechanism. Residue N208 is glycosylated (N-linked (GlcNAc...) asparagine). Y262 serves as a coordination point for substrate. C268 and C321 are disulfide-bonded. The N-linked (GlcNAc...) asparagine glycan is linked to N269. The active-site Nucleophile is E305. Y370 contacts substrate. Residues N453, N594, N624, N681, N703, N782, N788, N816, N826, and N879 are each glycosylated (N-linked (GlcNAc...) asparagine).

Belongs to the glycosyl hydrolase 35 family.

It localises to the secreted. It catalyses the reaction Hydrolysis of terminal non-reducing beta-D-galactose residues in beta-D-galactosides.. Functionally, cleaves beta-linked terminal galactosyl residues from gangliosides, glycoproteins, and glycosaminoglycans. The protein is Probable beta-galactosidase B (lacB) of Sclerotinia sclerotiorum (strain ATCC 18683 / 1980 / Ss-1) (White mold).